Here is a 345-residue protein sequence, read N- to C-terminus: CRISPR-associated endonuclease Cas1 1 (345 aa).

The a divalent metal cation site is built by glutamate 168, histidine 239, and glutamate 254.

It belongs to the CRISPR-associated endonuclease Cas1 family. Forms a heterotetramer with a Cas2 homodimer. Homodimer. The cofactor is a divalent metal cation.

Its function is as follows. CRISPR (clustered regularly interspaced short palindromic repeat), is an adaptive immune system that provides protection against mobile genetic elements (viruses, transposable elements and conjugative plasmids). CRISPR clusters contain sequences complementary to antecedent mobile elements and target invading nucleic acids. CRISPR clusters are transcribed and processed into CRISPR RNA (crRNA). Involved in the integration of spacer DNA into the CRISPR cassette. Acts as a dsDNA and ssRNA nuclease, binds to linear and circular dsDNA and linear ssRNA and ssDNA. This chain is CRISPR-associated endonuclease Cas1 1, found in Archaeoglobus fulgidus (strain ATCC 49558 / DSM 4304 / JCM 9628 / NBRC 100126 / VC-16).